The primary structure comprises 503 residues: 2-isopropylmalate synthase (503 aa).

Mn(2+)-binding residues include Asp-1, His-189, His-191, and Asn-225. Residues 1–254 (DGEQALQASL…STNINHKEIY (254 aa)) form the Pyruvate carboxyltransferase domain. A regulatory domain region spans residues 379–503 (SLKFFSVQSI…NKNLKNLKKQ (125 aa)).

Belongs to the alpha-IPM synthase/homocitrate synthase family. LeuA type 1 subfamily. In terms of assembly, homodimer. Mn(2+) is required as a cofactor.

The protein localises to the cytoplasm. It carries out the reaction 3-methyl-2-oxobutanoate + acetyl-CoA + H2O = (2S)-2-isopropylmalate + CoA + H(+). It functions in the pathway amino-acid biosynthesis; L-leucine biosynthesis; L-leucine from 3-methyl-2-oxobutanoate: step 1/4. Functionally, catalyzes the condensation of the acetyl group of acetyl-CoA with 3-methyl-2-oxobutanoate (2-ketoisovalerate) to form 3-carboxy-3-hydroxy-4-methylpentanoate (2-isopropylmalate). This chain is 2-isopropylmalate synthase, found in Buchnera aphidicola subsp. Uroleucon ambrosiae.